A 127-amino-acid chain; its full sequence is Aspartate 1-decarboxylase (127 aa).

Serine 25 functions as the Schiff-base intermediate with substrate; via pyruvic acid in the catalytic mechanism. Serine 25 is modified (pyruvic acid (Ser)). Threonine 57 contacts substrate. Residue tyrosine 58 is the Proton donor of the active site. 73–75 (GAA) provides a ligand contact to substrate.

The protein belongs to the PanD family. Heterooctamer of four alpha and four beta subunits. Pyruvate is required as a cofactor. In terms of processing, is synthesized initially as an inactive proenzyme, which is activated by self-cleavage at a specific serine bond to produce a beta-subunit with a hydroxyl group at its C-terminus and an alpha-subunit with a pyruvoyl group at its N-terminus.

The protein localises to the cytoplasm. The catalysed reaction is L-aspartate + H(+) = beta-alanine + CO2. It functions in the pathway cofactor biosynthesis; (R)-pantothenate biosynthesis; beta-alanine from L-aspartate: step 1/1. Catalyzes the pyruvoyl-dependent decarboxylation of aspartate to produce beta-alanine. The sequence is that of Aspartate 1-decarboxylase from Listeria innocua serovar 6a (strain ATCC BAA-680 / CLIP 11262).